Consider the following 527-residue polypeptide: Catalase (527 aa).

Positions 1–22 (MADNRDPASDQMKHWKEQRAAQ) are enriched in basic and acidic residues. Residues 1–42 (MADNRDPASDQMKHWKEQRAAQKPDVLTTGGGNPVGDKLNSL) form a disordered region. A Blocked amino end (Ala); alternate modification is found at A2. The residue at position 2 (A2) is an N-acetylalanine; alternate. A Phosphoserine modification is found at S9. K13 bears the N6-succinyllysine mark. Residues H75 and N148 contribute to the active site. Positions 194, 198, 201, 203, 213, and 215 each coordinate NADP(+). The residue at position 221 (K221) is an N6-succinyllysine. At K233 the chain carries N6-acetyllysine. NADP(+) is bound by residues K237, W303, and H305. Y358 provides a ligand contact to heme. Phosphoserine is present on residues S417 and S434. The NADP(+) site is built by Q442, T445, and F446. K449 and K480 each carry N6-acetyllysine; alternate. N6-succinyllysine; alternate is present on residues K449 and K480. Position 499 is an N6-acetyllysine (K499). T511 carries the phosphothreonine modification. S517 carries the post-translational modification Phosphoserine. The Microbody targeting signal; atypical motif lies at 524–527 (KANL).

The protein belongs to the catalase family. As to quaternary structure, homotetramer. Interacts (via microbody targeting signal) with PEX5, monomeric form interacts with PEX5, leading to its translocation into peroxisomes. It depends on heme as a cofactor. Requires NADP(+) as cofactor.

The protein resides in the peroxisome matrix. It carries out the reaction 2 H2O2 = O2 + 2 H2O. Functionally, catalyzes the degradation of hydrogen peroxide (H(2)O(2)) generated by peroxisomal oxidases to water and oxygen, thereby protecting cells from the toxic effects of hydrogen peroxide. Promotes growth of cells including T-cells, B-cells, myeloid leukemia cells, melanoma cells, mastocytoma cells and normal and transformed fibroblast cells. This chain is Catalase (CAT), found in Bos taurus (Bovine).